The chain runs to 104 residues: Large ribosomal subunit protein uL24 (104 aa).

It belongs to the universal ribosomal protein uL24 family. In terms of assembly, part of the 50S ribosomal subunit.

In terms of biological role, one of two assembly initiator proteins, it binds directly to the 5'-end of the 23S rRNA, where it nucleates assembly of the 50S subunit. Functionally, one of the proteins that surrounds the polypeptide exit tunnel on the outside of the subunit. This Pectobacterium carotovorum subsp. carotovorum (strain PC1) protein is Large ribosomal subunit protein uL24.